Reading from the N-terminus, the 320-residue chain is Cytochrome f (320 aa).

The N-terminal stretch at 1-35 (MQTRNAFSYIKEEITRSISVLLVIYIIIRAPISNA) is a signal peptide. Heme-binding residues include tyrosine 36, cysteine 56, cysteine 59, and histidine 60. Residues 286-305 (VQGLLFFLASIIFAQIFLVL) traverse the membrane as a helical segment.

Belongs to the cytochrome f family. The 4 large subunits of the cytochrome b6-f complex are cytochrome b6, subunit IV (17 kDa polypeptide, petD), cytochrome f and the Rieske protein, while the 4 small subunits are PetG, PetL, PetM and PetN. The complex functions as a dimer. It depends on heme as a cofactor.

It is found in the plastid. The protein localises to the chloroplast thylakoid membrane. In terms of biological role, component of the cytochrome b6-f complex, which mediates electron transfer between photosystem II (PSII) and photosystem I (PSI), cyclic electron flow around PSI, and state transitions. The polypeptide is Cytochrome f (Lotus japonicus (Lotus corniculatus var. japonicus)).